An 875-amino-acid chain; its full sequence is Ectonucleotide pyrophosphatase/phosphodiesterase family member 3 (875 aa).

The Cytoplasmic portion of the chain corresponds to 1–11 (MDSRLALATEE). Residues 12 to 30 (PIKKDSLKRYKILCAVLLA) traverse the membrane as a helical; Signal-anchor for type II membrane protein segment. Topologically, residues 31–875 (LLVIVSLGLG…TYLPTFETII (845 aa)) are extracellular. 2 SMB domains span residues 51–94 (HIGS…VKST) and 95–139 (QIWT…GEVP). Intrachain disulfides connect Cys55/Cys72, Cys59/Cys90, Cys70/Cys83, Cys76/Cys82, Cys99/Cys116, Cys104/Cys134, Cys114/Cys127, Cys120/Cys126, Cys145/Cys191, and Cys153/Cys365. The Cell attachment site signature appears at 79-81 (RGD). Positions 161 to 545 (PVILFSMDGF…HGSLNHLLKA (385 aa)) are phosphodiesterase. Asp168 lines the Zn(2+) pocket. Residue Lys205 participates in ATP binding. Thr206 serves as a coordination point for Zn(2+). The Nucleophile role is filled by Thr206. ATP is bound at residue Asn227. N-linked (GlcNAc...) asparagine glycosylation is present at Asn237. Asp276 contributes to the ATP binding site. N-linked (GlcNAc...) asparagine glycosylation is found at Asn280 and Asn289. Tyr290 is a binding site for ATP. Zn(2+)-binding residues include Asp326, His330, Asp373, and His374. Disulfide bonds link Cys381–Cys478, Cys429–Cys818, Cys562–Cys623, Cys575–Cys679, Cys577–Cys664, and Cys787–Cys797. His483 is a Zn(2+) binding site. Residues Asn533, Asn574, Asn594, and Asn702 are each glycosylated (N-linked (GlcNAc...) asparagine). Residues 582 to 875 (TSGQEEQVNQ…TYLPTFETII (294 aa)) form a nuclease region. Residues Asp752, Asn754, Asp756, His758, and Asp760 each coordinate Ca(2+). Asn789 carries an N-linked (GlcNAc...) asparagine glycan.

Belongs to the nucleotide pyrophosphatase/phosphodiesterase family. Monomer and homodimer. Zn(2+) is required as a cofactor. In terms of processing, the N-terminal is blocked. N-glycosylated. N-glycosylation is necessary for normal transport to the cell membrane, but is not the apical targeting signal. Detected in intestinal epithelium and liver (at protein level).

The protein localises to the cell membrane. The protein resides in the apical cell membrane. It localises to the secreted. It catalyses the reaction Hydrolytically removes 5'-nucleotides successively from the 3'-hydroxy termini of 3'-hydroxy-terminated oligonucleotides.. The enzyme catalyses a ribonucleoside 5'-triphosphate + H2O = a ribonucleoside 5'-phosphate + diphosphate + H(+). The catalysed reaction is ATP + H2O = AMP + diphosphate + H(+). It carries out the reaction CTP + H2O = CMP + diphosphate + H(+). It catalyses the reaction GTP + H2O = GMP + diphosphate + H(+). The enzyme catalyses UTP + H2O = UMP + diphosphate + H(+). The catalysed reaction is UDP-N-acetyl-alpha-D-glucosamine + H2O = N-acetyl-alpha-D-glucosamine 1-phosphate + UMP + 2 H(+). It carries out the reaction P(1),P(3)-bis(5'-adenosyl) triphosphate + H2O = AMP + ADP + 2 H(+). It catalyses the reaction P(1),P(4)-bis(5'-adenosyl) tetraphosphate + H2O = AMP + ATP + 2 H(+). The enzyme catalyses P(1),P(5)-bis(5'-adenosyl) pentaphosphate + H2O = adenosine 5'-tetraphosphate + AMP + 2 H(+). The catalysed reaction is P(1),P(4)-bis(5'-guanosyl) tetraphosphate + H2O = GMP + GTP + 2 H(+). Hydrolase that metabolizes extracellular nucleotides, including ATP, GTP, UTP and CTP. Limits mast cells and basophils response during inflammation and during the chronic phases of allergic responses by eliminating extracellular ATP, a signaling molecule activating these cells in an autocrine manner. Metabolizes extracellular ATP in the lumen of the small intestine, and thereby prevents ATP-induced apoptosis of intestinal plasmacytoid dendritic cells. Has a broad specificity and can also hydrolyze UDP-GlcNAc into UMP and GlcNAc-1-phosphate and potentially several other intracellular nucleotide sugars, including UDP-GalNAc, CMP-NeuAc, GDP-Fuc, and UDP-GlcA. Thereby, could modulate glycan biosynthesis and protein glycosylation. Can hydrolyze extracellular dinucleoside polyphosphates, including the vasoactive adenosine polyphosphates as well. In addition, displays an alkaline phosphodiesterase activity in vitro. In Rattus norvegicus (Rat), this protein is Ectonucleotide pyrophosphatase/phosphodiesterase family member 3.